Reading from the N-terminus, the 356-residue chain is DNA polymerase IV (356 aa).

Residues 7–188 form the UmuC domain; that stretch reads IIHIDMDAFY…IPVTKFYGVG (182 aa). 2 residues coordinate Mg(2+): Asp11 and Asp106. The active site involves Glu107.

The protein belongs to the DNA polymerase type-Y family. As to quaternary structure, monomer. Mg(2+) serves as cofactor.

The protein localises to the cytoplasm. The catalysed reaction is DNA(n) + a 2'-deoxyribonucleoside 5'-triphosphate = DNA(n+1) + diphosphate. Its function is as follows. Poorly processive, error-prone DNA polymerase involved in untargeted mutagenesis. Copies undamaged DNA at stalled replication forks, which arise in vivo from mismatched or misaligned primer ends. These misaligned primers can be extended by PolIV. Exhibits no 3'-5' exonuclease (proofreading) activity. May be involved in translesional synthesis, in conjunction with the beta clamp from PolIII. The polypeptide is DNA polymerase IV (Listeria monocytogenes serotype 4a (strain HCC23)).